A 122-amino-acid polypeptide reads, in one-letter code: Large ribosomal subunit protein uL14c (122 aa).

It belongs to the universal ribosomal protein uL14 family. As to quaternary structure, part of the 50S ribosomal subunit.

The protein resides in the plastid. The protein localises to the chloroplast. Functionally, binds to 23S rRNA. The chain is Large ribosomal subunit protein uL14c from Gossypium barbadense (Sea Island cotton).